The sequence spans 97 residues: Protein MxiI (97 aa).

This sequence to S.typhimurium PrgJ.

In terms of biological role, necessary for the secretion of IPA invasins. In Shigella flexneri, this protein is Protein MxiI (mxiI).